Consider the following 605-residue polypeptide: Methyl-CpG-binding domain protein 1 (605 aa).

One can recognise an MBD domain in the interval 1-69 (MAEDWLDCPA…TLFDFKQGIL (69 aa)). A disordered region spans residues 80-123 (AVASKKRKKPSRPAKTRKRQVGPQSGEVRKEAPRDETKADTDTA). Over residues 83–99 (SKKRKKPSRPAKTRKRQ) the composition is skewed to basic residues. The Nuclear localization signal motif lies at 84-88 (KKRKK). Residues 106–120 (EVRKEAPRDETKADT) are compositionally biased toward basic and acidic residues. A Glycyl lysine isopeptide (Lys-Gly) (interchain with G-Cter in SUMO2) cross-link involves residue Lys-117. CXXC-type zinc fingers lie at residues 169–216 (RMFK…RRCL) and 217–263 (RIVE…RRCL). Cys-176, Cys-179, Cys-182, Cys-188, Cys-191, Cys-194, Cys-210, Cys-215, Cys-225, Cys-228, Cys-231, Cys-237, Cys-240, Cys-243, Cys-257, and Cys-262 together coordinate Zn(2+). The tract at residues 269–308 (RRKGGCDSKMAARRRPGAQPLPPPPPSQSPEPTEPHPRAL) is disordered. Lys-277 is covalently cross-linked (Glycyl lysine isopeptide (Lys-Gly) (interchain with G-Cter in SUMO2)). The span at 287 to 297 (QPLPPPPPSQS) shows a compositional bias: pro residues. A Phosphoserine modification is found at Ser-297. The CXXC-type 3 zinc finger occupies 330 to 378 (TNRRQNRKCGACAACLRRMDCGRCDFCCDKPKFGGSNQKRQKCRWRQCL). The Zn(2+) site is built by Cys-338, Cys-341, Cys-344, Cys-350, Cys-353, Cys-356, Cys-372, and Cys-377. Ser-391 and Ser-399 each carry phosphoserine. Residues 391 to 451 (SESEDGAGSP…EAGGGFVLPP (61 aa)) form a disordered region. Residues 403–417 (YRRRKRPSSARRHHL) are compositionally biased toward basic residues. Lys-422 is covalently cross-linked (Glycyl lysine isopeptide (Lys-Gly) (interchain with G-Cter in SUMO2)). The span at 426 to 439 (ATRTAQPDHTQAPT) shows a compositional bias: polar residues. Lys-440 is covalently cross-linked (Glycyl lysine isopeptide (Lys-Gly) (interchain with G-Cter in SUMO2)). Residues Lys-499 and Lys-538 each participate in a glycyl lysine isopeptide (Lys-Gly) (interchain with G-Cter in SUMO2); alternate cross-link. The tract at residues 520 to 573 (VLVPGCPSKAVDPGLPSVKQEPPDPEEDKEENKDDSASKLAPEEEAGGAGTPVI) is disordered. The interval 529–592 (AVDPGLPSVK…RFRDTAVWLP (64 aa)) is transcriptional repression domain (TRD). Lys-558 participates in a covalent cross-link: Glycyl lysine isopeptide (Lys-Gly) (interchain with G-Cter in SUMO2).

As to quaternary structure, interacts with OASL, ATF7IP, ATF7IP2 and BAHD1. Binds CHAF1A and the SUV39H1-CBX5 complex via the MBD domain. Binds MGP via the TRD domain. May be part of the MeCP1 complex. Post-translationally, sumoylated, sumoylation may increase interaction with ATF7IP. Widely expressed.

Its subcellular location is the nucleus. The protein localises to the nucleus matrix. The protein resides in the nucleus speckle. It localises to the chromosome. Transcriptional repressor that binds CpG islands in promoters where the DNA is methylated at position 5 of cytosine within CpG dinucleotides. Binding is abolished by the presence of 7-mG that is produced by DNA damage by methylmethanesulfonate (MMS). Acts as transcriptional repressor and plays a role in gene silencing by recruiting ATF7IP, which in turn recruits factors such as the histone methyltransferase SETDB1. Probably forms a complex with SETDB1 and ATF7IP that represses transcription and couples DNA methylation and histone 'Lys-9' trimethylation. Isoform 1 and isoform 2 can also repress transcription from unmethylated promoters. The protein is Methyl-CpG-binding domain protein 1 of Homo sapiens (Human).